Here is a 282-residue protein sequence, read N- to C-terminus: Acetyl-coenzyme A carboxylase carboxyl transferase subunit beta 1 (282 aa).

One can recognise a CoA carboxyltransferase N-terminal domain in the interval 23–282 (LMTKCPECRH…MHTKGGVQHV (260 aa)). Residues Cys27, Cys30, Cys46, and Cys49 each coordinate Zn(2+). The segment at 27 to 49 (CPECRHILLTKELEKNHKVCTKC) adopts a C4-type zinc-finger fold.

This sequence belongs to the AccD/PCCB family. In terms of assembly, acetyl-CoA carboxylase is a heterohexamer composed of biotin carboxyl carrier protein (AccB), biotin carboxylase (AccC) and two subunits each of ACCase subunit alpha (AccA) and ACCase subunit beta (AccD). The cofactor is Zn(2+).

Its subcellular location is the cytoplasm. The enzyme catalyses N(6)-carboxybiotinyl-L-lysyl-[protein] + acetyl-CoA = N(6)-biotinyl-L-lysyl-[protein] + malonyl-CoA. The protein operates within lipid metabolism; malonyl-CoA biosynthesis; malonyl-CoA from acetyl-CoA: step 1/1. In terms of biological role, component of the acetyl coenzyme A carboxylase (ACC) complex. Biotin carboxylase (BC) catalyzes the carboxylation of biotin on its carrier protein (BCCP) and then the CO(2) group is transferred by the transcarboxylase to acetyl-CoA to form malonyl-CoA. The polypeptide is Acetyl-coenzyme A carboxylase carboxyl transferase subunit beta 1 (Lysinibacillus sphaericus (strain C3-41)).